The sequence spans 479 residues: Poly(A) polymerase catalytic subunit (479 aa).

Residues D202 and D204 contribute to the active site. 3 residues coordinate Ca(2+): D202, D204, and D253.

The protein belongs to the poxviridae poly(A) polymerase catalytic subunit family. As to quaternary structure, heterodimer of a large (catalytic) subunit and a small (regulatory) subunit.

The enzyme catalyses RNA(n) + ATP = RNA(n)-3'-adenine ribonucleotide + diphosphate. Functionally, polymerase that creates the 3'-poly(A) tail of mRNA's. In Cowpox virus (strain GRI-90 / Grishak) (CPV), this protein is Poly(A) polymerase catalytic subunit (OPG063).